The sequence spans 67 residues: Cold shock protein (67 aa).

One can recognise a CSD domain in the interval 4-64; that stretch reads GTVKWFNAEK…GAKGPQATGV (61 aa).

It localises to the cytoplasm. The chain is Cold shock protein (csp) from Arthrobacter globiformis.